We begin with the raw amino-acid sequence, 507 residues long: E3 SUMO-protein ligase PIAS4 (507 aa).

Ala2 is subject to N-acetylalanine. Residue Lys9 forms a Glycyl lysine isopeptide (Lys-Gly) (interchain with G-Cter in SUMO2) linkage. Residues 12–46 form the SAP domain; sequence VMSFRVSDLQMLLGFVGRSKSGLKHELVTRALQLV. Residues 20 to 24 carry the LXXLL motif motif; the sequence is LQMLL. Lys35 participates in a covalent cross-link: Glycyl lysine isopeptide (Lys-Gly) (interchain with G-Cter in SUMO); alternate. Lys35 participates in a covalent cross-link: Glycyl lysine isopeptide (Lys-Gly) (interchain with G-Cter in SUMO2); alternate. Residues Lys56, Lys59, Lys68, and Lys69 each participate in a glycyl lysine isopeptide (Lys-Gly) (interchain with G-Cter in SUMO2) cross-link. Lys107 carries the N6-acetyllysine modification. One can recognise a PINIT domain in the interval 112–272; the sequence is LGRLPTKTLK…SVALYLVRQL (161 aa). A Glycyl lysine isopeptide (Lys-Gly) (interchain with G-Cter in SUMO2) cross-link involves residue Lys118. Lys128 is covalently cross-linked (Glycyl lysine isopeptide (Lys-Gly) (interchain with G-Cter in SUMO)). Residues 304–385 form an SP-RING-type zinc finger; the sequence is PDSEIATTGV…LSKILSECEG (82 aa). The Zn(2+) site is built by Cys335, His337, Cys358, and Cys361. A disordered region spans residues 426–507; sequence APASSTPGIG…PFQKGLVPAC (82 aa). Residues 434 to 450 show a composition bias toward gly residues; the sequence is IGSGLSGPGSAGSGAGA. Residues 474 to 489 show a composition bias toward acidic residues; the sequence is SEDEDEDEDDDEDEDE.

The protein belongs to the PIAS family. Interacts with AR, GATA2, LEF1, TP53 and STAT1 (IFNG-induced). Interacts with TICAM1. Interacts with MTA1. Interacts with PRDM1/Blimp-1. Interacts with TRIM32 upon treatment with UVB and TNF-alpha. In terms of assembly, (Microbial infection) Interacts ewith Moloney murine leukemia virus Capsid protein p30. Sumoylated. Lys-35 is the main site of sumoylation. Sumoylation is required for TCF4 sumoylation and transcriptional activation. Represses LEF1 transcriptional activity. SUMO1 is the preferred conjugate. In terms of processing, ubiquitinated by TRIM32 upon treatment with UVB and TNF-alpha. Widely expressed, with highest levels in testis. Also expressed in vascular endothelial cells, in primary keratinocytes and in the CNS, including cortex, olfactory bulb, spinal cord, thalamus and trigeminal ganglion. Low expression, if any, in liver and lung.

The protein resides in the nucleus. It localises to the PML body. It carries out the reaction S-ubiquitinyl-[E2 ubiquitin-conjugating enzyme]-L-cysteine + [acceptor protein]-L-lysine = [E2 ubiquitin-conjugating enzyme]-L-cysteine + N(6)-ubiquitinyl-[acceptor protein]-L-lysine.. It participates in protein modification; protein sumoylation. Functions as an E3-type small ubiquitin-like modifier (SUMO) ligase, stabilizing the interaction between UBE2I and the substrate, and as a SUMO-tethering factor. Mediates sumoylation of ALKBH5, AXIN1, CEBPA, KLF8, GATA2, PARK7, HERC2, MYB, TCF4 and RNF168. Plays a crucial role as a transcriptional coregulation in various cellular pathways, including the STAT pathway, the p53/TP53 pathway, the Wnt pathway and the steroid hormone signaling pathway. Involved in gene silencing. In Wnt signaling, represses LEF1 and enhances TCF4 transcriptional activities through promoting their sumoylations. Enhances the sumoylation of MTA1 and may participate in its paralog-selective sumoylation. Binds to AT-rich DNA sequences, known as matrix or scaffold attachment regions (MARs/SARs). Catalyzes conjugation of SUMO2 to KAT5 in response to DNA damage, facilitating repair of DNA double-strand breaks (DSBs) via homologous recombination (HR). Mediates sumoylation of PARP1 in response to PARP1 trapping to chromatin. Mediates sumoylation of KLF8, repressiing KLF8 transcriptional activity and cell cycle progression into G(1) phase. Sumoylates ALKBH5 downstream of MAPK8/JNK1 and MAPK9/JNK2 in response to reactive oxygen species (ROS), inhibiting ALKBH5 RNA demethylase activity. The protein is E3 SUMO-protein ligase PIAS4 (Pias4) of Mus musculus (Mouse).